The primary structure comprises 1092 residues: Probable arabinosyltransferase A (1092 aa).

A run of 13 helical transmembrane segments spans residues 21–43 (IARL…VPLL), 214–233 (AVMV…LALL), 249–271 (GLWT…IVGA), 324–346 (VWMR…RCVL), 353–372 (VAAN…AAWL), 382–399 (PLIA…ENSI), 404–426 (LWPA…QGLI), 517–534 (FAVL…MVLL), 541–563 (GAVS…LLIL), 568–590 (WAIQ…AFAF), 602–624 (ALYV…GWFY), 639–661 (IAHY…LAGW), and 682–704 (ALAS…GSMV). Residues 772–798 (PSGVSEHLEPEPVGTNPGTPNSEGPVD) are disordered.

The protein belongs to the emb family.

Its subcellular location is the cell membrane. Arabinosyl transferase responsible for the polymerization of arabinose into the arabinan of arabinogalactan. The polypeptide is Probable arabinosyltransferase A (embA) (Mycolicibacterium smegmatis (Mycobacterium smegmatis)).